We begin with the raw amino-acid sequence, 209 residues long: Large ribosomal subunit protein uL4 (209 aa).

Residues 47–72 (TSSTKTRSEVRGSSKKPWKQKGTGRA) form a disordered region. Residues 59 to 72 (SSKKPWKQKGTGRA) show a composition bias toward basic residues.

This sequence belongs to the universal ribosomal protein uL4 family. In terms of assembly, part of the 50S ribosomal subunit.

In terms of biological role, one of the primary rRNA binding proteins, this protein initially binds near the 5'-end of the 23S rRNA. It is important during the early stages of 50S assembly. It makes multiple contacts with different domains of the 23S rRNA in the assembled 50S subunit and ribosome. Functionally, forms part of the polypeptide exit tunnel. The chain is Large ribosomal subunit protein uL4 from Borreliella burgdorferi (strain ZS7) (Borrelia burgdorferi).